A 297-amino-acid polypeptide reads, in one-letter code: Probable GTP 3',8-cyclase (297 aa).

The Radical SAM core domain occupies 4–227 (RYGRQIRSFR…MQNRKKYVID (224 aa)). Position 13 (Arg-13) interacts with GTP. Positions 20 and 24 each coordinate [4Fe-4S] cluster. Tyr-26 is a binding site for S-adenosyl-L-methionine. Cys-27 provides a ligand contact to [4Fe-4S] cluster. Lys-61 serves as a coordination point for GTP. An S-adenosyl-L-methionine-binding site is contributed by Gly-65. Residue Thr-91 coordinates GTP. Ser-115 contributes to the S-adenosyl-L-methionine binding site. GTP is bound at residue Lys-152. 2 residues coordinate [4Fe-4S] cluster: Cys-243 and Cys-246. Position 248-250 (248-250 (RIR)) interacts with GTP. Position 260 (Cys-260) interacts with [4Fe-4S] cluster.

It belongs to the radical SAM superfamily. MoaA family. [4Fe-4S] cluster serves as cofactor.

It catalyses the reaction GTP + AH2 + S-adenosyl-L-methionine = (8S)-3',8-cyclo-7,8-dihydroguanosine 5'-triphosphate + 5'-deoxyadenosine + L-methionine + A + H(+). Its pathway is cofactor biosynthesis; molybdopterin biosynthesis. In terms of biological role, catalyzes the cyclization of GTP to (8S)-3',8-cyclo-7,8-dihydroguanosine 5'-triphosphate. The protein is Probable GTP 3',8-cyclase of Methanococcus maripaludis (strain DSM 14266 / JCM 13030 / NBRC 101832 / S2 / LL).